A 210-amino-acid polypeptide reads, in one-letter code: MSSIVEHVVLFKLNDDDVDSGKINSMVNGINELVNLDQVLHLYCGSIHRLITTTASDFTHVLHSRYRSKEDLNAYAIHPDHVRVVKESESIREDIMAVDWIAEQAPEALAPPLGSIGKITLLKLKENVMEEAKLEIMEVMKEKFEGIDQITVGENFSPGRSKDFSIGSISYFRDLGEIEAVDDQMKLQNDKIRDYVDDTIVVEFNVPSSS.

Stress-response A/B barrel domains lie at 5-100 (VEHV…AVDW) and 116-204 (IGKI…VVEF).

Homodimer.

It is found in the cytoplasm. Its subcellular location is the cytosol. Functionally, involved in defense against fungal pathogens. Possesses antifungal activity against diverse pathogenic fungi. The polypeptide is Stress-response A/B barrel domain-containing protein DABB1 (Arabidopsis thaliana (Mouse-ear cress)).